We begin with the raw amino-acid sequence, 129 residues long: uncharacterized protein (129 aa).

This is an uncharacterized protein from Sinorhizobium fredii (strain NBRC 101917 / NGR234).